Here is a 304-residue protein sequence, read N- to C-terminus: Uricase (304 aa).

Ala-2 bears the N-acetylalanine mark. N6-acetyllysine; alternate occurs at positions 10 and 23. N6-succinyllysine; alternate occurs at positions 10 and 23. The Charge relay system role is filled by Lys-23. Residues Lys-27 and Lys-36 each carry the N6-acetyllysine modification. Ser-39 and Ser-63 each carry phosphoserine. The Charge relay system role is filled by Thr-68. Urate is bound by residues Thr-68 and Asp-69. N6-acetyllysine occurs at positions 118, 122, and 164. Phe-170 is a binding site for urate. Lys-175 and Lys-185 each carry N6-acetyllysine. Urate is bound at residue Arg-187. An N6-acetyllysine; alternate mark is found at Lys-221 and Lys-228. N6-succinyllysine; alternate occurs at positions 221 and 228. Phosphoserine is present on Ser-232. The urate site is built by Val-235, Gln-236, and Asn-262. The active-site Charge relay system is the His-264. N6-acetyllysine is present on Lys-278. Residue Tyr-289 is modified to Phosphotyrosine. A Microbody targeting signal motif is present at residues 302-304; it reads SRL.

The protein belongs to the uricase family. As to quaternary structure, homotetramer.

It localises to the peroxisome. The catalysed reaction is urate + O2 + H2O = 5-hydroxyisourate + H2O2. Its pathway is purine metabolism; urate degradation; (S)-allantoin from urate: step 1/3. Catalyzes the oxidation of uric acid to 5-hydroxyisourate, which is further processed to form (S)-allantoin. In Sus scrofa (Pig), this protein is Uricase (UOX).